Reading from the N-terminus, the 64-residue chain is MDNNTEKFNELAAIADESELNEMLDENITGAGSTIQCVNTTIGTILSVVFDCCPTSACTPPCRF.

A propeptide spans 1-31 (MDNNTEKFNELAAIADESELNEMLDENITGA) (cleaved by FlvT). The segment at residues 33–37 (STIQC) is a cross-link (lanthionine (Ser-Cys); by FlvM2). 2,3-didehydrobutyrine; by FlvM2 is present on residues threonine 34 and threonine 41. 3 consecutive cross-links (beta-methyllanthionine (Thr-Cys); by FlvM2) follow at residues 44 to 52 (TILSVVFDC), 55 to 58 (TSAC), and 59 to 62 (TPPC). The segment at residues 47 to 53 (SVVFDCC) is a cross-link (lanthionine (Ser-Cys); by FlvM2).

Post-translationally, contains LL-lanthionine, DL-lanthionine, and DL-beta-methyllanthionine, when coepressed in E.coli with the flavecin synthetase FlvM2.

It is found in the secreted. Its function is as follows. Lanthionine-containing peptide that does probably not show antibacterial activity, since its analog [+2]Flvbeta.d does not show antibacterial activity against M.luteus. Also does not show antibiotic activity when tested with [Del2]Flvalpha.a, an analog of Flvalpha.a, which is encoded by the same operon than Flvbeta.d. The bactericidal activity of lantibiotics is based on depolarization of energized bacterial cytoplasmic membranes, initiated by the formation of aqueous transmembrane pores. The chain is Lantipeptide Flvbeta.d from Ruminococcus flavefaciens.